The sequence spans 317 residues: Zinc transporter ZIP3 (317 aa).

The Extracellular segment spans residues 1-3 (MSQ). A helical transmembrane segment spans residues 4 to 24 (LLVAKVLCMVGVFFFMLLGSL). At 25–42 (LPVKVIEADFEKAHRSKK) the chain is on the cytoplasmic side. A helical transmembrane segment spans residues 43–63 (VLSLCNTFGGGVFLATCFNAL). The Extracellular portion of the chain corresponds to 64–85 (LPAVRDKLQQVLSLGHISTDYP). Residues 86–106 (LAETLMMVGFFLTVFVEQLVL) form a helical membrane-spanning segment. Residues 107-172 (TFRRERPPFI…RELGRPGPLR (66 aa)) lie on the Cytoplasmic side of the membrane. A phosphoserine mark is found at Ser-125 and Ser-129. The helical transmembrane segment at 173–193 (LLSLVFALSAHSVFEGLALGL) threads the bilayer. Residues 194-199 (QEEGER) are Extracellular-facing. The helical transmembrane segment at 200–220 (VVSLFVGVAVHETLVAVALGI) threads the bilayer. Residues 221-232 (SMARSAVPLRDA) lie on the Cytoplasmic side of the membrane. A helical membrane pass occupies residues 233-253 (AKLAVTVSAMIPVGIGLGLGI). Residues 254–265 (ESARSVASSVAS) lie on the Extracellular side of the membrane. Residues 266-286 (ALLQGLAGGTFLFVTFLEILA) traverse the membrane as a helical segment. Residues 287–294 (KELEERSE) are Cytoplasmic-facing. Residues 295–315 (QLLKVLFLVLGYAVLAGMVFL) form a helical membrane-spanning segment. The Extracellular portion of the chain corresponds to 316-317 (KW).

Belongs to the ZIP transporter (TC 2.A.5) family.

It localises to the cell membrane. The protein resides in the apical cell membrane. It catalyses the reaction Zn(2+)(in) = Zn(2+)(out). Functionally, transporter for the divalent cation Zn(2+). Mediates the influx of Zn(2+) into cells from extracellular space. Controls Zn(2+) accumulation into dentate gyrus granule cells in the hippocampus. Mediates Zn(2+) reuptake from the secreted milk within the alveolar lumen. The protein is Zinc transporter ZIP3 (Slc39a3) of Rattus norvegicus (Rat).